A 510-amino-acid polypeptide reads, in one-letter code: MMQHKEIKHPYQGIKYTVLVVIAAFRVANALTTKTFFQPDEYWQSLEPAHRLAYGYGYLTWEWHEGLRSSLPPLVGAGIYKALQLLGLDDPRIVRIAPKIVMALFASAGDVYTWKLSARLQGPAEAPWALFVSLLSAFNWFFLTRTFSNSAEMVLTAVALNYWSFNGKEVNFKRLSVALFIGAISCVLRPTNAILWAVLGLHLVLTTTAKMRVLWLAVRNVALVFAATYYIDYLYYGEPVFPLLNFLKFNLLQSLAHFYGTSPTLYYFYEALPLLTVGWLPLTLWGLWINRSQVLVKAALAVVVAFSLIRHKEVRFIYPLVPILHMAAAEAITQTPKKLRKWLVWSLALVNILVAGYFSQVHQRGVVDVVEYLSTEPQVTSVGFLMPCHSTPYQSHLHRDIPVWFLTCEPPIGFTAEEQMTYRDQADQFYDDPLQFVQTQFPESVAVSAREARTPLFHPSHLAIFESLEKKSPEVIEHLVELGYKRGKTFFNSHFHDDWRREGDVVVYNL.

7 consecutive transmembrane segments (helical) span residues 17 to 37 (TVLV…KTFF), 96 to 116 (IAPK…TWKL), 123 to 143 (PAEA…WFFL), 145 to 163 (RTFS…LNYW), 179 to 199 (LFIG…WAVL), 221 to 241 (VALV…EPVF), and 269 to 289 (YEAL…GLWI). A glycan (N-linked (GlcNAc...) asparagine) is linked at Asn290. A run of 2 helical transmembrane segments spans residues 316–336 (FIYP…TQTP) and 342–362 (WLVW…SQVH).

Belongs to the glycosyltransferase 22 family. PIGB subfamily.

It localises to the endoplasmic reticulum membrane. It functions in the pathway glycolipid biosynthesis; glycosylphosphatidylinositol-anchor biosynthesis. Mannosyltransferase involved in glycosylphosphatidylinositol-anchor biosynthesis. Transfers the third mannose to Man2-GlcN-acyl-PI during GPI precursor assembly. In Yarrowia lipolytica (strain CLIB 122 / E 150) (Yeast), this protein is GPI mannosyltransferase 3 (GPI10).